The chain runs to 632 residues: Sporulenol synthase (632 aa).

Residue Asp377 is the Proton donor of the active site. 3 PFTB repeats span residues 395-436, 465-505, and 513-554; these read WERG…EDAA, IQRA…HACG, and IQKA…VQTA.

This sequence belongs to the terpene cyclase/mutase family.

The protein resides in the cell membrane. It carries out the reaction sporulenol = (R)-tetraprenyl-beta-curcumene + H2O. Its pathway is secondary metabolite biosynthesis; hopanoid biosynthesis. Catalyzes the cyclization of tetraprenyl beta-curcumene into sporulenol. The polypeptide is Sporulenol synthase (sqhC) (Bacillus subtilis (strain 168)).